The following is a 274-amino-acid chain: MTFIDMLRGATARNDSLLCVGLDPEPSRFPAGLRGDAGRIYDFCAAIVDATADLACAFKPQIAYFAAHRAEEQLERLMRHMRATAPHVPVILDAKRGDIGSTAQQYAIEAFERYGADAVTLSPFMGFDSIEPYLAYHGKGAFLLCRTSNPGGDDLQSQRLASVDGQPLLFEHIARQAQGPWNRNGQLGLVVGATYPAEIERVRALAPTLPLLIPGVGAQGGDAAATVRAGLRPDGPVVVNSSRAILYASADEGFAAAARQAAQATRDALNAARG.

Catalysis depends on K95, which acts as the Proton donor.

This sequence belongs to the OMP decarboxylase family. Type 2 subfamily.

It carries out the reaction orotidine 5'-phosphate + H(+) = UMP + CO2. Its pathway is pyrimidine metabolism; UMP biosynthesis via de novo pathway; UMP from orotate: step 2/2. The protein is Orotidine 5'-phosphate decarboxylase of Paracidovorax citrulli (strain AAC00-1) (Acidovorax citrulli).